A 688-amino-acid chain; its full sequence is MEDSGIQRGIWDGDAKAVQQCLTDIFTSVYTTCDIPENAIFGPCVLSHTSLYDSIAFVALKSTDKRTVPYIFRVDTSAANGSSEGLMWLRLVQSARDKEEQNLEAYIKNGQLFYRSLRRIAKDEELLVWYGKELTELLLLCPSRAHKMNGSSPYTCLECSQRFQFEFPYVAHLRFRCPKRLHSTDANPQDEQGGGLGTKDHGGGGGGKEQQQQQQQQQQEAPLIPGPKFCKAGPIHHYPASSPEASNPPGSAGAGSAKPSTDFHNLARELENSRGSSSCVAAPGVGSGGSGHQEAELSPDGVATGGCKGKRRFPEEAAAEGGGAGLAGGRARFSERPLATSKEELVCTPQQYRAAGSYFGLEENGRLFAPPSPETGEAKRSAFVEVKKAGRAVGLQEEAAATDGAGGTAEDPDAGGGVAGGGSNGSSTPAAGSPGAPEKLLAPRPGGSLPGRLEGGSPARGSAFTSVSQLGGGGGAGTAGTAGGSGGGQTAASDERKSAFSQPARSFSQLSPLVLGQKLGALEPCHPGDGVGPTRLYPAAADPLAVKLQGAADLNGACGPLASGGGGGLPKQSPFLYATAFWPKSSAAAAAAAAAAAGPLQLQLPSALTLLPPSFTSLCLPAQNWCAKCNASFRMTSDLVYHMRSHHKKEYAMEPLVKRRREEKLKCPICNESFRERHHLSRHMTSHN.

One can recognise an SET domain in the interval 16 to 131 (KAVQQCLTDI…KDEELLVWYG (116 aa)). Tyrosine 130 contacts S-adenosyl-L-methionine. The C2H2-type 1 zinc-finger motif lies at 154–182 (YTCLECSQRFQFEFPYVAHLRFRCPKRLH). Disordered regions lie at residues 184 to 309 (TDAN…GCKG) and 397 to 506 (EEAA…PARS). A compositionally biased stretch (gly residues) spans 192-208 (QGGGLGTKDHGGGGGGK). 2 stretches are compositionally biased toward low complexity: residues 209–219 (EQQQQQQQQQQ) and 275–284 (GSSSCVAAPG). 2 stretches are compositionally biased toward gly residues: residues 414 to 424 (AGGGVAGGGSN) and 470 to 489 (LGGG…GGGQ). 2 C2H2-type zinc fingers span residues 624–647 (NWCA…RSHH) and 665–687 (LKCP…MTSH).

This sequence belongs to the class V-like SAM-binding methyltransferase superfamily. As to quaternary structure, interacts with BHLHE22. Interacts with EPM2A and NHLRC1. This interaction sequesters EPM2A and NHLRC1 to the nucleus. Expressed in brain, heart, liver, testes, retina. Highest expression is observed in the retina and hippocampus; moderately expressed in the cortex and cerebellum. In the retina, it is expressed in bipolar and amacrine cells.

It localises to the nucleus. In terms of biological role, probable histone methyltransferase, preferentially acting on 'Lys-9' of histone H3. Histone methyltransferase activity has not been confirmed in other species. Involved in the control of steroidogenesis through transcriptional repression of steroidogenesis marker genes such as CYP17A1 and LHCGR. Forms with BHLHE22 a transcriptional repressor complex controlling genes involved in neural development and neuronal differentiation. In the retina, it is required for rod bipolar and type 2 OFF-cone bipolar cell survival. This Mus musculus (Mouse) protein is PR domain zinc finger protein 8 (Prdm8).